A 315-amino-acid polypeptide reads, in one-letter code: Ornithine carbamoyltransferase (315 aa).

Residues 53 to 56 (STRT), glutamine 80, arginine 104, and 131 to 134 (HPCQ) each bind carbamoyl phosphate. Residues asparagine 163, aspartate 227, and 231–232 (SM) contribute to the L-ornithine site. Carbamoyl phosphate-binding positions include 267–268 (CL) and arginine 295.

This sequence belongs to the aspartate/ornithine carbamoyltransferase superfamily. OTCase family.

It localises to the cytoplasm. It carries out the reaction carbamoyl phosphate + L-ornithine = L-citrulline + phosphate + H(+). It functions in the pathway amino-acid biosynthesis; L-arginine biosynthesis; L-arginine from L-ornithine and carbamoyl phosphate: step 1/3. Its function is as follows. Reversibly catalyzes the transfer of the carbamoyl group from carbamoyl phosphate (CP) to the N(epsilon) atom of ornithine (ORN) to produce L-citrulline. The protein is Ornithine carbamoyltransferase of Rhodococcus jostii (strain RHA1).